The chain runs to 629 residues: MSSNPTSSVREFEYKAEMKQLLNLIVHSLYTHPEIFLRELISNASDALGKARFRMLSSDEGLDKSGDLKITITVDKESGSFVIEDTGIGMSEEELISNLGTVASSGTLGFMEALKEQQKEGQRLDANLIGQFGVGFYSVFMVTDEVTVETKSIESGLQGWRWKSSGQGSYTIEPVEREARGTRISFILKEEFREFAQEYRVEQIIKKYSNFVEYPIYIGSRQINSMTALWQRPKSELKQEEVNEFYKFIANDFKDPLDYLHVSVEGAVSFKALLFIPSEAPMELLYNQGALEKRGPQLYVKKVLIQHECRDLLPEYLRFVSGVVDTEDLPLNVSRELVQASPVMAKIKQILTTKLLGWFDTIAKEEPEKFRAFYKAFGTILKIGLNTDFTNRDKLIDLLRFETTKTVEGEYVTLKEYVGRMAEGQTEIYYHSGSSRAQMLAHPNLEYFRKRDIEVLLLSDPVDVFVIPSIFEYDKKPLKSIEKAEIDMSTVEPEGERLSAEGTVGVISLFKEVLGERVADVVESRRLVSSPVTLVSGKDALDSQFEKMMKMMNKDADMPSTKKILEINTAHPIIRNLAGKHAVGLSTDPVVRAAVTQLFESALLLEGDLESVADYVSRMNELVEAATRS.

Positions 1–335 are a; substrate-binding; it reads MSSNPTSSVR…TEDLPLNVSR (335 aa). The tract at residues 336 to 547 is b; the sequence is ELVQASPVMA…KDALDSQFEK (212 aa). The segment at 548 to 629 is c; that stretch reads MMKMMNKDAD…NELVEAATRS (82 aa).

The protein belongs to the heat shock protein 90 family. Homodimer.

The protein localises to the cytoplasm. Its function is as follows. Molecular chaperone. Has ATPase activity. This chain is Chaperone protein HtpG, found in Chlorobaculum tepidum (strain ATCC 49652 / DSM 12025 / NBRC 103806 / TLS) (Chlorobium tepidum).